The chain runs to 212 residues: Sentrin-specific protease 8 (212 aa).

M1 is subject to N-acetylmethionine. A protease region spans residues 11–174 (SLLRQSDVSL…MYVICNTEAL (164 aa)). Active-site residues include H102 and D119. The active-site Nucleophile is C163.

The protein belongs to the peptidase C48 family. As to expression, broadly expressed, with highest levels in kidney and pancreas.

Protease that catalyzes two essential functions in the NEDD8 pathway: processing of full-length NEDD8 to its mature form and deconjugation of NEDD8 from targeted proteins such as cullins or p53. The sequence is that of Sentrin-specific protease 8 (SENP8) from Homo sapiens (Human).